The sequence spans 1529 residues: DNA-directed RNA polymerase subunit beta' (1529 aa).

Zn(2+) contacts are provided by cysteine 156, cysteine 158, cysteine 183, and cysteine 186. Mg(2+)-binding residues include aspartate 1328, aspartate 1330, and aspartate 1332.

The protein belongs to the RNA polymerase beta' chain family. RpoC1 subfamily. As to quaternary structure, in plastids the minimal PEP RNA polymerase catalytic core is composed of four subunits: alpha, beta, beta', and beta''. When a (nuclear-encoded) sigma factor is associated with the core the holoenzyme is formed, which can initiate transcription. Mg(2+) is required as a cofactor. The cofactor is Zn(2+).

It is found in the plastid. The protein resides in the chloroplast. The catalysed reaction is RNA(n) + a ribonucleoside 5'-triphosphate = RNA(n+1) + diphosphate. Functionally, DNA-dependent RNA polymerase catalyzes the transcription of DNA into RNA using the four ribonucleoside triphosphates as substrates. The protein is DNA-directed RNA polymerase subunit beta' of Tetradesmus obliquus (Green alga).